A 295-amino-acid chain; its full sequence is Acetyl-coenzyme A carboxylase carboxyl transferase subunit beta (295 aa).

The disordered stretch occupies residues Met1–Lys20. A CoA carboxyltransferase N-terminal domain is found at Leu28 to Ala295. Zn(2+) contacts are provided by Cys32, Cys35, Cys51, and Cys54. The C4-type zinc-finger motif lies at Cys32–Cys54.

The protein belongs to the AccD/PCCB family. As to quaternary structure, acetyl-CoA carboxylase is a heterohexamer composed of biotin carboxyl carrier protein (AccB), biotin carboxylase (AccC) and two subunits each of ACCase subunit alpha (AccA) and ACCase subunit beta (AccD). It depends on Zn(2+) as a cofactor.

The protein resides in the cytoplasm. The enzyme catalyses N(6)-carboxybiotinyl-L-lysyl-[protein] + acetyl-CoA = N(6)-biotinyl-L-lysyl-[protein] + malonyl-CoA. Its pathway is lipid metabolism; malonyl-CoA biosynthesis; malonyl-CoA from acetyl-CoA: step 1/1. In terms of biological role, component of the acetyl coenzyme A carboxylase (ACC) complex. Biotin carboxylase (BC) catalyzes the carboxylation of biotin on its carrier protein (BCCP) and then the CO(2) group is transferred by the transcarboxylase to acetyl-CoA to form malonyl-CoA. This Xanthomonas axonopodis pv. citri (strain 306) protein is Acetyl-coenzyme A carboxylase carboxyl transferase subunit beta.